The sequence spans 829 residues: Periplasmic nitrate reductase (829 aa).

The tat-type signal signal peptide spans M1–A30. The region spanning I41–D97 is the 4Fe-4S Mo/W bis-MGD-type domain. [4Fe-4S] cluster is bound by residues C48, C51, C55, and C83. Mo-bis(molybdopterin guanine dinucleotide)-binding positions include K85, Q152, N177, C181, W214–M221, S245–H249, Q264–D266, M374, Q378, N484, S510–D511, K533, D560, and T718–T727. F794 serves as a coordination point for substrate. 2 residues coordinate Mo-bis(molybdopterin guanine dinucleotide): N802 and K819.

This sequence belongs to the prokaryotic molybdopterin-containing oxidoreductase family. NasA/NapA/NarB subfamily. Component of the periplasmic nitrate reductase NapAB complex composed of NapA and NapB. The cofactor is [4Fe-4S] cluster. Mo-bis(molybdopterin guanine dinucleotide) serves as cofactor. Post-translationally, predicted to be exported by the Tat system. The position of the signal peptide cleavage has not been experimentally proven.

It localises to the periplasm. It catalyses the reaction 2 Fe(II)-[cytochrome] + nitrate + 2 H(+) = 2 Fe(III)-[cytochrome] + nitrite + H2O. Catalytic subunit of the periplasmic nitrate reductase complex NapAB. Receives electrons from NapB and catalyzes the reduction of nitrate to nitrite. The polypeptide is Periplasmic nitrate reductase (Vibrio parahaemolyticus serotype O3:K6 (strain RIMD 2210633)).